The primary structure comprises 229 residues: E3 ubiquitin ligase TRIM40 (229 aa).

The RING-type zinc-finger motif lies at 14 to 57 (CPICQESLKEAVSTNCGHLFCRVCLTQHVEKASASGVFCCPLCR). The segment at 66-107 (GTGYICPNHQKRVCRFCEESRLLLCVECLVSPEHMSHHELTI) adopts a B box-type zinc-finger fold. Positions 71, 74, 93, and 99 each coordinate Zn(2+). Residues 107-154 (IENALSHYKERLNRRSRKLRKDIAELQRLKAQQEKKLQALQQWLGQLE) adopt a coiled-coil conformation.

It belongs to the TRIM/RBCC family. As to quaternary structure, interacts with NEDD8.

It carries out the reaction S-ubiquitinyl-[E2 ubiquitin-conjugating enzyme]-L-cysteine + [acceptor protein]-L-lysine = [E2 ubiquitin-conjugating enzyme]-L-cysteine + N(6)-ubiquitinyl-[acceptor protein]-L-lysine.. In terms of biological role, E3 ubiquitin-protein ligase that plays a role in the limitation of the innate immune response. Mediates inhibition of the RLR signaling pathway by ubiquitinating RIGI and IFIH1 receptors, leading to their proteasomal degradation. Also promotes the neddylation of IKBKG/NEMO, stabilizing NFKBIA, and thereby inhibiting of NF-kappa-B nuclear translocation and activation. In Pan troglodytes (Chimpanzee), this protein is E3 ubiquitin ligase TRIM40 (TRIM40).